The following is a 394-amino-acid chain: NAD(P)H-quinone oxidoreductase subunit H (394 aa).

It belongs to the complex I 49 kDa subunit family. As to quaternary structure, NDH-1 can be composed of about 15 different subunits; different subcomplexes with different compositions have been identified which probably have different functions.

It localises to the cellular thylakoid membrane. The catalysed reaction is a plastoquinone + NADH + (n+1) H(+)(in) = a plastoquinol + NAD(+) + n H(+)(out). It carries out the reaction a plastoquinone + NADPH + (n+1) H(+)(in) = a plastoquinol + NADP(+) + n H(+)(out). NDH-1 shuttles electrons from an unknown electron donor, via FMN and iron-sulfur (Fe-S) centers, to quinones in the respiratory and/or the photosynthetic chain. The immediate electron acceptor for the enzyme in this species is believed to be plastoquinone. Couples the redox reaction to proton translocation, and thus conserves the redox energy in a proton gradient. Cyanobacterial NDH-1 also plays a role in inorganic carbon-concentration. The polypeptide is NAD(P)H-quinone oxidoreductase subunit H (Synechococcus sp. (strain JA-3-3Ab) (Cyanobacteria bacterium Yellowstone A-Prime)).